Consider the following 495-residue polypeptide: Tripartite motif-containing protein 5 (495 aa).

Residue alanine 2 is modified to N-acetylalanine. Residues 15–60 (CPICLELLTEPLSLHCGHSFCQACITANHKKSMLYKEGERSCPVCR) form an RING-type zinc finger. Serine 87 bears the Phosphoserine mark. The B box-type zinc-finger motif lies at 92–133 (QKVDHCARHGEKLLLFCQEDSKVICWLCERSQEHRGHHTFLM). Residues cysteine 97, histidine 100, cysteine 119, and histidine 125 each coordinate Zn(2+). Residues 137-223 (AQEYHVKLQT…KSLTKSETKM (87 aa)) adopt a coiled-coil conformation. The tract at residues 187–200 (FEQLREILDREESN) is required for interaction with GABARAP and for autophagy. The B30.2/SPRY domain maps to 283 to 495 (LKGMLDMFRE…VPMTLCSPSS (213 aa)).

The protein belongs to the TRIM/RBCC family. In terms of assembly, can form homodimers and homotrimers. In addition to lower-order dimerization, also exhibits a higher-order multimerization and both low- and high-order multimerizations are essential for its restriction activity. Interacts with BTBD1 and BTBD2. Interacts with PSMC4, PSMC5, PSMD7 and HSPA8/HSC70. Interacts (via B30.2/SPRY domain) with HSPA1A/B. Interacts with PSMC2, MAP3K7/TAK1, TAB2 and TAB3. Interacts with SQSTM1. Interacts with TRIM6 and TRIM34. Interacts with ULK1 (phosphorylated form), GABARAP, GABARAPL1, GABARAPL2, MAP1LC3A, MAP1LC3C and BECN1. Degraded in a proteasome-independent fashion in the absence of viral infection but in a proteasome-dependent fashion following exposure to restriction sensitive virus. In terms of processing, autoubiquitinated in a RING finger- and UBE2D2-dependent manner. Monoubiquitinated by TRIM21. Deubiquitinated by Yersinia YopJ. Ubiquitination may not lead to proteasomal degradation.

The protein localises to the cytoplasm. The protein resides in the nucleus. It catalyses the reaction S-ubiquitinyl-[E2 ubiquitin-conjugating enzyme]-L-cysteine + [acceptor protein]-L-lysine = [E2 ubiquitin-conjugating enzyme]-L-cysteine + N(6)-ubiquitinyl-[acceptor protein]-L-lysine.. It functions in the pathway protein modification; protein ubiquitination. In terms of biological role, capsid-specific restriction factor that prevents infection from non-host-adapted retroviruses. Blocks viral replication early in the life cycle, after viral entry but before reverse transcription. In addition to acting as a capsid-specific restriction factor, also acts as a pattern recognition receptor that activates innate immune signaling in response to the retroviral capsid lattice. Binding to the viral capsid triggers its E3 ubiquitin ligase activity, and in concert with the heterodimeric ubiquitin conjugating enzyme complex UBE2V1-UBE2N (also known as UBC13-UEV1A complex) generates 'Lys-63'-linked polyubiquitin chains, which in turn are catalysts in the autophosphorylation of the MAP3K7/TAK1 complex (includes TAK1, TAB2, and TAB3). Activation of the MAP3K7/TAK1 complex by autophosphorylation results in the induction and expression of NF-kappa-B and MAPK-responsive inflammatory genes, thereby leading to an innate immune response in the infected cell. Plays a role in regulating autophagy through activation of autophagy regulator BECN1 by causing its dissociation from its inhibitors BCL2 and TAB2. The chain is Tripartite motif-containing protein 5 (TRIM5) from Macaca nemestrina (Pig-tailed macaque).